Reading from the N-terminus, the 427-residue chain is 12-alpha,13-alpha-dihydroxyfumitremorgin C prenyltransferase (427 aa).

Glu94 contacts substrate. Dimethylallyl diphosphate contacts are provided by Arg105, Lys192, Tyr194, Tyr268, Gln353, Tyr355, Tyr419, and Tyr423.

Belongs to the tryptophan dimethylallyltransferase family.

The enzyme catalyses 12alpha,13alpha-dihydroxyfumitremorgin C + dimethylallyl diphosphate = fumitremorgin B + diphosphate. The protein operates within mycotoxin biosynthesis. Functionally, 12-alpha,13-alpha-dihydroxyfumitremorgin C prenyltransferase; part of the gene cluster that mediates the biosynthesis of fumitremorgins, indole alkaloids that carry not only intriguing chemical structures, but also interesting biological and pharmacological activities. The biosynthesis of fumitremorgin-type alkaloids begins by condensation of the two amino acids L-tryptophan and L-proline to brevianamide F, catalyzed by the non-ribosomal peptide synthetase ftmA. Brevianamide F is then prenylated by the prenyltransferase ftmPT1/ftmB in the presence of dimethylallyl diphosphate, resulting in the formation of tryprostatin B. The three cytochrome P450 monooxygenases, ftmP450-1/ftmC, ftmP450-2/ftmE and ftmP450-3/FtmG, are responsible for the conversion of tryprostatin B to 6-hydroxytryprostatin B, tryprostatin A to fumitremorgin C and fumitremorgin C to 12,13-dihydroxyfumitremorgin C, respectively. The putative methyltransferase ftmMT/ftmD is expected for the conversion of 6-hydroxytryprostatin B to tryprostatin A. FtmPT2/FtmH catalyzes the prenylation of 12,13-dihydroxyfumitre-morgin C in the presence of dimethylallyl diphosphate, resulting in the formation of fumitremorgin B. Fumitremorgin B is further converted to verruculogen by ftmOx1/ftmF via the insertion of an endoperoxide bond between the two prenyl moieties. In some fungal species, verruculogen is further converted to fumitremorgin A, but the enzymes involved in this step have not been identified yet. This chain is 12-alpha,13-alpha-dihydroxyfumitremorgin C prenyltransferase, found in Aspergillus fumigatus (strain ATCC MYA-4609 / CBS 101355 / FGSC A1100 / Af293) (Neosartorya fumigata).